Reading from the N-terminus, the 328-residue chain is Cell division protein ZipA (328 aa).

Topologically, residues methionine 1–asparagine 4 are periplasmic. A helical transmembrane segment spans residues threonine 5–serine 25. Over asparagine 26–valine 328 the chain is Cytoplasmic. Positions threonine 43–valine 82 are disordered. Residues glutamine 57–valine 67 are compositionally biased toward polar residues.

Belongs to the ZipA family. As to quaternary structure, interacts with FtsZ via their C-terminal domains.

It is found in the cell inner membrane. Essential cell division protein that stabilizes the FtsZ protofilaments by cross-linking them and that serves as a cytoplasmic membrane anchor for the Z ring. Also required for the recruitment to the septal ring of downstream cell division proteins. This Haemophilus influenzae (strain PittEE) protein is Cell division protein ZipA.